Consider the following 449-residue polypeptide: Phosphoglucosamine mutase (449 aa).

S102 serves as the catalytic Phosphoserine intermediate. Mg(2+)-binding residues include S102, D241, D243, and D245. S102 bears the Phosphoserine mark.

This sequence belongs to the phosphohexose mutase family. Mg(2+) serves as cofactor. Activated by phosphorylation.

It catalyses the reaction alpha-D-glucosamine 1-phosphate = D-glucosamine 6-phosphate. Its function is as follows. Catalyzes the conversion of glucosamine-6-phosphate to glucosamine-1-phosphate. The sequence is that of Phosphoglucosamine mutase from Roseobacter denitrificans (strain ATCC 33942 / OCh 114) (Erythrobacter sp. (strain OCh 114)).